The sequence spans 427 residues: Probable protein phosphatase 2C 64 (427 aa).

A disordered region spans residues 1–36 (MGNCVARSGTAVDAGGDGGEDGKRRRRRWKAPREDQ). The PPM-type phosphatase domain occupies 53-331 (TATVYTQQGR…DDCAVVCLYL (279 aa)). Residues Asp89, Gly90, Asp276, and Asp322 each coordinate Mn(2+).

It belongs to the PP2C family. Mg(2+) is required as a cofactor. Mn(2+) serves as cofactor.

The enzyme catalyses O-phospho-L-seryl-[protein] + H2O = L-seryl-[protein] + phosphate. It carries out the reaction O-phospho-L-threonyl-[protein] + H2O = L-threonyl-[protein] + phosphate. The chain is Probable protein phosphatase 2C 64 from Oryza sativa subsp. japonica (Rice).